We begin with the raw amino-acid sequence, 688 residues long: MSFLLNLIPAISHTNHDEMHEPNQTHLHRHADTSPTNQHNTSHKMTTTEPIHVTTGSGESRDHTEPRHVTPTSPNALDGRRITIAYATETGNAQDFATLLGNACTRLRFESHVVQMNDLSPETLAQDVSVLVIVCSTTGQGEIPLNGKKLWKFLLRKKLPPNLLSHVTFTTFGLGDSSYPRFNWAIRKIHKRLSQLGASEVGSRGECDDMSPDSIETMYNEWQARFCESLLKAFPLPEGVEVIPGEKLLPAKFPVKVLTNKPKRDTSDADHVACTRKDVLQGTVVGNERVTAKGHFQDVRFFQIDANTEDNDMADLSRDFSKLNSDSRDLHDVSRAVSAGSSIDFSTGDTVSLFPQNSVADVDLLLRDQGWEDIADYKLDAPSLPPIEGGYVTPLTLRSLITHHLDIMGIPRQSFFTYVFHFATSERQKERLQEFSQPGEGLEDLFDYANRPRRSILEVVTEFDSLKIPLKYVLDVFPLMRPRLFSISQKAHTMPIQLCVAIVKYQTIIKRIREGVLTRWLGGLAIGQKIVFTKHSTPIPDLDNYDVIMVAPGTGVAPMRSLILSRESEKETVLFFGNRFREKDFLFQADLEKAVGDKKLNLFTSFSRDENSGGYVQQEMYRQKELVARVLCSKQGVLYVCGSSGKMPREVRITVVTCIQEVNGWTEEQAEEWVKGMEKSGRYLQETW.

The tract at residues 26 to 76 is disordered; the sequence is HLHRHADTSPTNQHNTSHKMTTTEPIHVTTGSGESRDHTEPRHVTPTSPNA. Residues 33–58 show a composition bias toward polar residues; sequence TSPTNQHNTSHKMTTTEPIHVTTGSG. Residues 59–68 are compositionally biased toward basic and acidic residues; it reads ESRDHTEPRH. One can recognise a Flavodoxin-like domain in the interval 82-227; the sequence is ITIAYATETG…MYNEWQARFC (146 aa). FMN contacts are provided by residues 88–93, 136–139, 174–183, and D209; these read TETGNA, STTG, and LGDSSYPRFN. The 267-residue stretch at 277–543 folds into the FAD-binding FR-type domain; it reads KDVLQGTVVG…KHSTPIPDLD (267 aa). Residues R453, 483–486, and 515–518 contribute to the FAD site; these read RLFS and GVLT. NADP(+)-binding positions include T554, 607 to 608, and 613 to 617; these read SR and GGYVQ. An FAD-binding site is contributed by W688.

This sequence belongs to the NADPH-dependent diflavin oxidoreductase NDOR1 family. The protein in the N-terminal section; belongs to the flavodoxin family. It in the C-terminal section; belongs to the flavoprotein pyridine nucleotide cytochrome reductase family. In terms of assembly, interacts with DRE2; as part of the cytosolic iron-sulfur (Fe-S) protein assembly (CIA) machinery. FAD serves as cofactor. Requires FMN as cofactor.

The protein resides in the cytoplasm. It localises to the mitochondrion. The catalysed reaction is 2 oxidized [2Fe-2S]-[protein] + NADPH = 2 reduced [2Fe-2S]-[protein] + NADP(+) + H(+). NADPH-dependent reductase which is a central component of the cytosolic iron-sulfur (Fe-S) protein assembly (CIA) machinery. Transfers electrons from NADPH via its FAD and FMN prosthetic groups to the [2Fe-2S] cluster of DRE2, another key component of the CIA machinery. In turn, this reduced cluster provides electrons for assembly of cytosolic iron-sulfur cluster proteins. Positively controls H(2)O(2)-induced cell death. This Yarrowia lipolytica (strain CLIB 122 / E 150) (Yeast) protein is NADPH-dependent diflavin oxidoreductase 1.